A 55-amino-acid chain; its full sequence is Neurotoxin B-II (55 aa).

At proline 10 the chain carries Hydroxyproline. 4 disulfides stabilise this stretch: cysteine 12/cysteine 48, cysteine 16/cysteine 52, cysteine 23/cysteine 41, and cysteine 26/cysteine 37.

The protein belongs to the worm B-toxin family.

Its subcellular location is the secreted. Its function is as follows. This toxin increases the excitability of nerves by delaying the inactivation of the voltage-gated sodium channel (Nav). Only acts on some crustacean. Neurotoxin B-II is less abundant, but 15-fold more toxic than neurotoxin B-VI. The chain is Neurotoxin B-II from Cerebratulus lacteus (Milky ribbon worm).